A 144-amino-acid polypeptide reads, in one-letter code: 3-hydroxyacyl-[acyl-carrier-protein] dehydratase FabZ (144 aa).

His-48 is a catalytic residue.

The protein belongs to the thioester dehydratase family. FabZ subfamily.

The protein localises to the cytoplasm. The enzyme catalyses a (3R)-hydroxyacyl-[ACP] = a (2E)-enoyl-[ACP] + H2O. Its function is as follows. Involved in unsaturated fatty acids biosynthesis. Catalyzes the dehydration of short chain beta-hydroxyacyl-ACPs and long chain saturated and unsaturated beta-hydroxyacyl-ACPs. The sequence is that of 3-hydroxyacyl-[acyl-carrier-protein] dehydratase FabZ from Listeria innocua serovar 6a (strain ATCC BAA-680 / CLIP 11262).